A 581-amino-acid chain; its full sequence is Chaperonin GroEL 1 (581 aa).

ATP contacts are provided by residues 29 to 32, 86 to 90, Gly-413, and Asp-492; these read TIGP and DGTTT. Residues 522 to 543 are disordered; sequence PEPEPAAPGGPSGDPMGGMGGM. Over residues 531–543 the composition is skewed to gly residues; the sequence is GPSGDPMGGMGGM.

The protein belongs to the chaperonin (HSP60) family. As to quaternary structure, forms a cylinder of 14 subunits composed of two heptameric rings stacked back-to-back. Interacts with the co-chaperonin GroES.

Its subcellular location is the cytoplasm. It catalyses the reaction ATP + H2O + a folded polypeptide = ADP + phosphate + an unfolded polypeptide.. In terms of biological role, together with its co-chaperonin GroES, plays an essential role in assisting protein folding. The GroEL-GroES system forms a nano-cage that allows encapsulation of the non-native substrate proteins and provides a physical environment optimized to promote and accelerate protein folding. This chain is Chaperonin GroEL 1, found in Prochlorococcus marinus (strain MIT 9215).